Here is a 327-residue protein sequence, read N- to C-terminus: Phenylalanine--tRNA ligase alpha subunit (327 aa).

Glutamate 252 provides a ligand contact to Mg(2+).

It belongs to the class-II aminoacyl-tRNA synthetase family. Phe-tRNA synthetase alpha subunit type 1 subfamily. As to quaternary structure, tetramer of two alpha and two beta subunits. Requires Mg(2+) as cofactor.

The protein localises to the cytoplasm. It carries out the reaction tRNA(Phe) + L-phenylalanine + ATP = L-phenylalanyl-tRNA(Phe) + AMP + diphosphate + H(+). The protein is Phenylalanine--tRNA ligase alpha subunit of Shewanella woodyi (strain ATCC 51908 / MS32).